A 234-amino-acid polypeptide reads, in one-letter code: UDP-2,3-diacylglucosamine hydrolase (234 aa).

5 residues coordinate Mn(2+): aspartate 9, histidine 11, aspartate 42, asparagine 80, and histidine 115. Residue 80–81 coordinates substrate; the sequence is NR. Residues aspartate 123, serine 161, lysine 165, lysine 168, and histidine 196 each coordinate substrate. Mn(2+)-binding residues include histidine 196 and histidine 198.

The protein belongs to the LpxH family. Mn(2+) serves as cofactor.

The protein localises to the cell inner membrane. The enzyme catalyses UDP-2-N,3-O-bis[(3R)-3-hydroxytetradecanoyl]-alpha-D-glucosamine + H2O = 2-N,3-O-bis[(3R)-3-hydroxytetradecanoyl]-alpha-D-glucosaminyl 1-phosphate + UMP + 2 H(+). The protein operates within glycolipid biosynthesis; lipid IV(A) biosynthesis; lipid IV(A) from (3R)-3-hydroxytetradecanoyl-[acyl-carrier-protein] and UDP-N-acetyl-alpha-D-glucosamine: step 4/6. Hydrolyzes the pyrophosphate bond of UDP-2,3-diacylglucosamine to yield 2,3-diacylglucosamine 1-phosphate (lipid X) and UMP by catalyzing the attack of water at the alpha-P atom. Involved in the biosynthesis of lipid A, a phosphorylated glycolipid that anchors the lipopolysaccharide to the outer membrane of the cell. The chain is UDP-2,3-diacylglucosamine hydrolase from Haemophilus ducreyi (strain 35000HP / ATCC 700724).